The primary structure comprises 547 residues: Nitrate transporter 2.1 (547 aa).

Transmembrane regions (helical) follow at residues 53–73 (WICF…APII), 86–106 (NAGV…GIVV), 113–133 (YGAA…ALVT), 143–163 (FFIG…GTMF), 173–193 (AIAA…MPLI), 211–231 (AFFV…LLGI), 262–280 (LGNY…SFGV), 296–316 (FGLN…MNLF), 338–358 (IWAL…LGKV), 366–386 (IVIM…HFGI), 400–420 (GLVG…WFAG), and 433–453 (GFVY…FIWF).

This sequence belongs to the major facilitator superfamily. Nitrate/nitrite porter (TC 2.A.1.8) family.

The protein localises to the cell membrane. Nitrite transport mediated by system 1 is very sensitive to inhibition by nitrate. Its function is as follows. Involved in nitrate transport, but does not seem to be able to mediate transport by its own. Acts as a dual component transporter with NAR2 (system 1). Imports nitrate with high affinity when expressed with NAR2 in a heterologous system (Xenopus oocytes). Involved in a high affinity and a high capacity transport specific for both nitrate and nitrite. The chain is Nitrate transporter 2.1 from Chlamydomonas reinhardtii (Chlamydomonas smithii).